Consider the following 405-residue polypeptide: MTKPSVHEHPGVLADNGLCEPKTPAGRRLLDLLERYLPALEAESRDNDREATLPVHLFDRMRKEGVLGATVPEDLGGLGVHSLHDVALALARIAGRDAGVALALHMQFSRGLTLDFEWRHGAPSTRPLAEDLLRQMGAGEAVICGAVKDVRGTTVLTRATDGSYRLNGRKTLVSMAGIATHYVVSTRLEEAGAPVRLAAPVVARTTPGLTVLDNWDGMGMRSSGSVDIVFDGCPVDRDRVLPRGEPGVRDDAALAGQTVSSIAMLGIYVGIAEAARRIALTELRRRGGAPAGVRTTVAEIDARLFALHTAVASALTTADRLADDLSGDLAARGRAMMTPFQYAKLLVNRHSVGVVDDCLMLVGGAGYSNSHPLARLYRDVRAGGFMHPYNFTDGVDYLSEVALGR.

2 residues coordinate dTDP: E117 and R332.

It belongs to the acyl-CoA dehydrogenase family. In terms of assembly, homotetramer. It depends on FAD as a cofactor.

It functions in the pathway antibiotic biosynthesis. In terms of biological role, nitrososynthase involved in the biosynthesis of baumycin. Catalyzes the double-oxidation of TDP-L-epi-vancosamine to TDP-L-epi-vancosonitrose. The rapid turnover of TDP-L-epi-vancosamine suggests that this compound, or a closely related analog, is the natural substrate for DnmZ. Can also catalyze the double-oxidation of TDP-L-evernosamine to TDP-L-evernitrosose. In Streptomyces peucetius, this protein is Amino sugar nitrososynthase DnmZ.